The sequence spans 309 residues: MMALPKAGIIFNDIKPAAARAAAELTEKFQDAGYRVYQTTGWGGILGFPRPDSPVCHTPIDRLAAEGFDEAMPFAIVLGGDGTVLAAARQVAPFDIPLLTINTGHMGFLTEGYLNQIHPAIDTLLAGQYALEDRSMIEVRVFRDERLIWEALALNEAVLHKEPLSGICHFEVAIGRHNIVDIAADGVIVATPTGSTAYALSAGGPVITPDVQVLQLIPICPHSLAARGLVFADTESLVVHPPTNHQHLILSLDGNSGCYIWPGDQVRIRRARYRTRLIRLQPPEFFALLREKLGWGLPHIAKPLSVELP.

Catalysis depends on Asp81, which acts as the Proton acceptor. Residues Asp81–Gly82, Asn155–Glu156, Asp185, Thr196–Ser201, and Asn255 each bind NAD(+).

It belongs to the NAD kinase family. A divalent metal cation is required as a cofactor.

Its subcellular location is the cytoplasm. The catalysed reaction is NAD(+) + ATP = ADP + NADP(+) + H(+). Functionally, involved in the regulation of the intracellular balance of NAD and NADP, and is a key enzyme in the biosynthesis of NADP. Catalyzes specifically the phosphorylation on 2'-hydroxyl of the adenosine moiety of NAD to yield NADP. This is NAD kinase 2 from Gloeobacter violaceus (strain ATCC 29082 / PCC 7421).